Here is a 602-residue protein sequence, read N- to C-terminus: Probable translation initiation factor IF-2 (602 aa).

Positions 10–227 constitute a tr-type G domain; the sequence is LRQPIVVVLG…LLAGLTQNYM (218 aa). The segment at 19 to 26 is G1; sequence GHVDHGKT. GTP is bound at residue 19–26; it reads GHVDHGKT. The interval 44–48 is G2; sequence EMTQE. Residues 83 to 86 are G3; it reads DTPG. GTP contacts are provided by residues 83-87 and 137-140; these read DTPGH and NKID. Positions 137 to 140 are G4; the sequence is NKID. Residues 205–207 are G5; that stretch reads SAK.

It belongs to the TRAFAC class translation factor GTPase superfamily. Classic translation factor GTPase family. IF-2 subfamily.

Its function is as follows. Function in general translation initiation by promoting the binding of the formylmethionine-tRNA to ribosomes. Seems to function along with eIF-2. In Sulfurisphaera tokodaii (strain DSM 16993 / JCM 10545 / NBRC 100140 / 7) (Sulfolobus tokodaii), this protein is Probable translation initiation factor IF-2.